The sequence spans 392 residues: Formate-dependent phosphoribosylglycinamide formyltransferase (392 aa).

Residues 22-23 (EL) and Glu82 each bind N(1)-(5-phospho-beta-D-ribosyl)glycinamide. Residues Arg114, Lys155, 160–165 (SSGKGQ), 195–198 (EGLV), and Glu203 contribute to the ATP site. The region spanning 119–308 (RLAAETLSLP…EFALHVRAFL (190 aa)) is the ATP-grasp domain. Mg(2+) contacts are provided by Glu267 and Glu279. Residues Asp286, Lys355, and 362–363 (RR) contribute to the N(1)-(5-phospho-beta-D-ribosyl)glycinamide site.

This sequence belongs to the PurK/PurT family. In terms of assembly, homodimer.

It carries out the reaction N(1)-(5-phospho-beta-D-ribosyl)glycinamide + formate + ATP = N(2)-formyl-N(1)-(5-phospho-beta-D-ribosyl)glycinamide + ADP + phosphate + H(+). It participates in purine metabolism; IMP biosynthesis via de novo pathway; N(2)-formyl-N(1)-(5-phospho-D-ribosyl)glycinamide from N(1)-(5-phospho-D-ribosyl)glycinamide (formate route): step 1/1. Its function is as follows. Involved in the de novo purine biosynthesis. Catalyzes the transfer of formate to 5-phospho-ribosyl-glycinamide (GAR), producing 5-phospho-ribosyl-N-formylglycinamide (FGAR). Formate is provided by PurU via hydrolysis of 10-formyl-tetrahydrofolate. In Sodalis glossinidius (strain morsitans), this protein is Formate-dependent phosphoribosylglycinamide formyltransferase.